We begin with the raw amino-acid sequence, 523 residues long: Metalloprotease TIKI2 (523 aa).

Positions 1–26 (MGKTMWARAVFLCFSVGTLLWQEVLT) are cleaved as a signal peptide. Residues 27 to 499 (RRIPVDTGQC…HSQSNSSPKC (473 aa)) lie on the Extracellular side of the membrane. 4 N-linked (GlcNAc...) asparagine glycosylation sites follow: Asn-225, Asn-234, Asn-283, and Asn-341. Residues 500–516 (LSASPAFLYTLVTLCLI) form a helical membrane-spanning segment. Over 517 to 523 (TTMRTRS) the chain is Cytoplasmic.

The protein belongs to the TIKI family. Mn(2+) serves as cofactor. Requires Co(2+) as cofactor.

The protein resides in the cell membrane. Functionally, metalloprotease that acts as a negative regulator of the Wnt signaling pathway by mediating the cleavage of the N-terminal residues of a subset of Wnt proteins. Following cleavage, Wnt proteins become oxidized and form large disulfide-bond oligomers, leading to their inactivation. Able to cleave wnt8. Required for head formation. The sequence is that of Metalloprotease TIKI2 (trabd2b) from Xenopus tropicalis (Western clawed frog).